The sequence spans 385 residues: Phosphorylated adapter RNA export protein (385 aa).

The segment covering 1-18 (MALEAGDMEEGQLSDSDS) has biased composition (acidic residues). Positions 1 to 28 (MALEAGDMEEGQLSDSDSDMTVVPSDRP) are disordered. Alanine 2 is modified (N-acetylalanine). The tract at residues 2–320 (ALEAGDMEEG…KAARKRRTQL (319 aa)) is necessary for interaction with CBP80. A phosphoserine mark is found at serine 14, serine 16, serine 56, serine 57, serine 60, and serine 63. The Nuclear localization signal motif lies at 71–74 (KRKR). Residues 75 to 101 (QKCHNTPPKPEPFPFGPSGQKTALNGG) are disordered. Positions 120–129 (VATELGILGM) match the Nuclear export signal motif. A compositionally biased stretch (basic and acidic residues) spans 164–184 (KDLDEYMHGDKKPGSKEDENG). The interval 164 to 192 (KDLDEYMHGDKKPGSKEDENGQGHLKRKR) is disordered. The short motif at 189 to 192 (KRKR) is the Nuclear localization signal element. Residues 219-319 (EKVADEIAFR…KKAARKRRTQ (101 aa)) form a sufficient for poly U RNA-binding region. The tract at residues 270–278 (GSRRRTPGG) is necessary for poly U RNA-binding and snRNA export. Residue threonine 287 is modified to Phosphothreonine. Positions 335–385 (QEDDDTSRETFASDTNEALASLDEAQEGPGETKLDAEEAIEVDHPQDLDIF) are disordered. A compositionally biased stretch (polar residues) spans 343-352 (ETFASDTNEA). Serine 347 bears the Phosphoserine mark. Over residues 364–385 (GETKLDAEEAIEVDHPQDLDIF) the composition is skewed to basic and acidic residues.

It belongs to the PHAX family. In terms of assembly, found in a U snRNA export complex with PHAX/RNUXA, NCBP1/CBP80, NCBP2/CBP20, RAN, XPO1 and m7G-capped RNA. Part of a precomplex with PHAX/RNUXA, NCBP1/CBP80, NCBP2/CBP20 and m7G-capped RNA. Interacts with NCBP1/CBP80. Found in a complex with snoRNA. Interacts with NCBP2/CBP20. Interacts with DDX39A; this interaction stimulates PHAX RNA binding activity. Post-translationally, phosphorylated in the nucleus. Dephosphorylated in the cytoplasm.

Its subcellular location is the nucleus. The protein resides in the nucleoplasm. The protein localises to the cajal body. It is found in the cytoplasm. Its function is as follows. A phosphoprotein adapter involved in the XPO1-mediated U snRNA export from the nucleus. Bridge components required for U snRNA export, the cap binding complex (CBC)-bound snRNA on the one hand and the GTPase Ran in its active GTP-bound form together with the export receptor XPO1 on the other. Its phosphorylation in the nucleus is required for U snRNA export complex assembly and export, while its dephosphorylation in the cytoplasm causes export complex disassembly. It is recycled back to the nucleus via the importin alpha/beta heterodimeric import receptor. The directionality of nuclear export is thought to be conferred by an asymmetric distribution of the GTP- and GDP-bound forms of Ran between the cytoplasm and nucleus. Its compartmentalized phosphorylation cycle may also contribute to the directionality of export. Binds strongly to m7G-capped U1 and U5 small nuclear RNAs (snRNAs) in a sequence-unspecific manner and phosphorylation-independent manner. Also plays a role in the biogenesis of U3 small nucleolar RNA (snoRNA). Involved in the U3 snoRNA transport from nucleoplasm to Cajal bodies. Binds strongly to m7G-capped U3, U8 and U13 precursor snoRNAs and weakly to trimethylated (TMG)-capped U3, U8 and U13 snoRNAs. Also binds to telomerase RNA. This Mus musculus (Mouse) protein is Phosphorylated adapter RNA export protein (Phax).